The sequence spans 337 residues: tRNA N6-adenosine threonylcarbamoyltransferase (337 aa).

2 residues coordinate Fe cation: His-111 and His-115. Residues 134–138 (LVSGG), Asp-167, Gly-180, and Asn-272 each bind substrate. Asp-300 contacts Fe cation.

It belongs to the KAE1 / TsaD family. It depends on Fe(2+) as a cofactor.

It localises to the cytoplasm. It catalyses the reaction L-threonylcarbamoyladenylate + adenosine(37) in tRNA = N(6)-L-threonylcarbamoyladenosine(37) in tRNA + AMP + H(+). Its function is as follows. Required for the formation of a threonylcarbamoyl group on adenosine at position 37 (t(6)A37) in tRNAs that read codons beginning with adenine. Is involved in the transfer of the threonylcarbamoyl moiety of threonylcarbamoyl-AMP (TC-AMP) to the N6 group of A37, together with TsaE and TsaB. TsaD likely plays a direct catalytic role in this reaction. This chain is tRNA N6-adenosine threonylcarbamoyltransferase, found in Erwinia tasmaniensis (strain DSM 17950 / CFBP 7177 / CIP 109463 / NCPPB 4357 / Et1/99).